The chain runs to 274 residues: Rhamnulose-1-phosphate aldolase (274 aa).

The active site involves Glu117. Positions 141, 143, and 212 each coordinate Zn(2+).

This sequence belongs to the aldolase class II family. RhaD subfamily. As to quaternary structure, homotetramer. Zn(2+) is required as a cofactor.

It is found in the cytoplasm. It catalyses the reaction L-rhamnulose 1-phosphate = (S)-lactaldehyde + dihydroxyacetone phosphate. The protein operates within carbohydrate degradation; L-rhamnose degradation; glycerone phosphate from L-rhamnose: step 3/3. In terms of biological role, catalyzes the reversible cleavage of L-rhamnulose-1-phosphate to dihydroxyacetone phosphate (DHAP) and L-lactaldehyde. This Shigella sonnei (strain Ss046) protein is Rhamnulose-1-phosphate aldolase.